Consider the following 647-residue polypeptide: MTYEIHPLPIILMSDFDIVVIGAGHAGCEAALAAARLGHKTLLAVMNVDTIGAMSCNPAIGGLAKGHLVREIDALGGEMARVIDATSIQFRRLNTSKGPAVQSSRAQADRLLYRLQMKSVIEHQENLTVSQTEVNGFIVEDGKITGVTTTIDEKISVKAAIVATGTFLNGLVHIGLKNFPAGRLGDGPSTGLADWFYDNGFAVGRMKTGTVPRIDSLTIDYSELEAQESDMPPAHFSFDSQGKGYTLPQLPCYITYTNEKTHEIIRKGIDQSPLYAGIIQGIGARYCPSIEDKIMRFPEKDRHQVFLEPEGLDTVEVYPNGLPTSLPLEVQIEMLQSIKGLENARIIRPGYAIEYDYIDPLGLRPSLATKKIENLYLAGQINGTSGYEEAAAQGLMAGINATRYLEEREPLILDRSQAYIGVLIDDLVTCGTKEPYRLFTSRAEYRLLLREDNADSRLCQIGKDIGLLDEDKHQRYLIKQAAIDAGCATLDAISIKPTAEVNRILNDAASADLKQKSALSSLLRRPEINITFLQKLPLTAGDKEAVIALANSAVCQEVQVRIKFKGYLQRQEEQVQRFKRMETLKLPEDLNYAQLSGLSNEVVEKLSTIRPISLGQASRISGITPAAVSVLQVHLRKLNYLKSNDKI.

FAD-binding positions include 22–27, V134, and S189; that span reads GAGHAG. 283-297 is a binding site for NAD(+); the sequence is GARYCPSIEDKIMRF. Q380 is a binding site for FAD.

This sequence belongs to the MnmG family. Homodimer. Heterotetramer of two MnmE and two MnmG subunits. Requires FAD as cofactor.

It localises to the cytoplasm. In terms of biological role, NAD-binding protein involved in the addition of a carboxymethylaminomethyl (cmnm) group at the wobble position (U34) of certain tRNAs, forming tRNA-cmnm(5)s(2)U34. The sequence is that of tRNA uridine 5-carboxymethylaminomethyl modification enzyme MnmG from Desulfotalea psychrophila (strain LSv54 / DSM 12343).